The following is a 100-amino-acid chain: MTNRMELSGTVVKDPIRSQSPAGISHCRFWLEHRSVVVEADLPRQVFCRMPVVVSGKGSQDITQQIVLGSNIKVSGFVAYQTGRNGVGKLVLHADDIIHI.

The 100-residue stretch at 1–100 (MTNRMELSGT…VLHADDIIHI (100 aa)) folds into the SSB domain.

This sequence belongs to the PriB family. In terms of assembly, homodimer. Interacts with PriA and DnaT. Component of the replication restart primosome. Primosome assembly occurs via a 'hand-off' mechanism. PriA binds to replication forks, subsequently PriB then DnaT bind; DnaT then displaces ssDNA to generate the helicase loading substrate.

Involved in the restart of stalled replication forks, which reloads the replicative helicase on sites other than the origin of replication; the PriA-PriB pathway is the major replication restart pathway. During primosome assembly it facilitates complex formation between PriA and DnaT on DNA; stabilizes PriA on DNA. Stimulates the DNA unwinding activity of PriA helicase. The polypeptide is Replication restart protein PriB (Vibrio vulnificus (strain CMCP6)).